The chain runs to 113 residues: N(2)-fixation sustaining protein CowN (113 aa).

The protein belongs to the CowN family.

Functionally, is required to sustain N(2)-dependent growth in the presence of low levels of carbon monoxide (CO). Probably acts by protecting the N(2) fixation ability of the nitrogenase complex, which is inactivated in the presence of CO. This Wolinella succinogenes (strain ATCC 29543 / DSM 1740 / CCUG 13145 / JCM 31913 / LMG 7466 / NCTC 11488 / FDC 602W) (Vibrio succinogenes) protein is N(2)-fixation sustaining protein CowN.